Reading from the N-terminus, the 107-residue chain is U1-lycotoxin-Ls1b (107 aa).

The first 20 residues, 1–20 (MMKALVVVALLVTLISYSSS), serve as a signal peptide directing secretion. Residues 21-41 (EGIDDLEADELLSLMANEQTR) constitute a propeptide that is removed on maturation. Cystine bridges form between cysteine 44/cysteine 59, cysteine 51/cysteine 68, cysteine 58/cysteine 86, and cysteine 70/cysteine 84.

The protein belongs to the neurotoxin 19 (CSTX) family. 04 (U1-Lctx) subfamily. As to expression, expressed by the venom gland.

It localises to the secreted. This chain is U1-lycotoxin-Ls1b, found in Lycosa singoriensis (Wolf spider).